The primary structure comprises 338 residues: 4-hydroxythreonine-4-phosphate dehydrogenase (338 aa).

Positions 140 and 141 each coordinate substrate. The a divalent metal cation site is built by H172, H217, and H271. Residues K279, N288, and R297 each coordinate substrate.

The protein belongs to the PdxA family. As to quaternary structure, homodimer. A divalent metal cation is required as a cofactor.

The protein localises to the cytoplasm. It carries out the reaction 4-(phosphooxy)-L-threonine + NAD(+) = 3-amino-2-oxopropyl phosphate + CO2 + NADH. The protein operates within cofactor biosynthesis; pyridoxine 5'-phosphate biosynthesis; pyridoxine 5'-phosphate from D-erythrose 4-phosphate: step 4/5. Catalyzes the NAD(P)-dependent oxidation of 4-(phosphooxy)-L-threonine (HTP) into 2-amino-3-oxo-4-(phosphooxy)butyric acid which spontaneously decarboxylates to form 3-amino-2-oxopropyl phosphate (AHAP). The chain is 4-hydroxythreonine-4-phosphate dehydrogenase from Prosthecochloris aestuarii (strain DSM 271 / SK 413).